The following is a 359-amino-acid chain: 3-dehydroquinate synthase (359 aa).

NAD(+) is bound by residues 72 to 77, 106 to 110, 130 to 131, lysine 143, lysine 152, and 170 to 173; these read EGEIHK, GVIGD, TS, and CLKT. The Zn(2+) site is built by glutamate 185, histidine 248, and histidine 264.

Belongs to the sugar phosphate cyclases superfamily. Dehydroquinate synthase family. Co(2+) serves as cofactor. Zn(2+) is required as a cofactor. It depends on NAD(+) as a cofactor.

The protein resides in the cytoplasm. It carries out the reaction 7-phospho-2-dehydro-3-deoxy-D-arabino-heptonate = 3-dehydroquinate + phosphate. It functions in the pathway metabolic intermediate biosynthesis; chorismate biosynthesis; chorismate from D-erythrose 4-phosphate and phosphoenolpyruvate: step 2/7. Functionally, catalyzes the conversion of 3-deoxy-D-arabino-heptulosonate 7-phosphate (DAHP) to dehydroquinate (DHQ). The polypeptide is 3-dehydroquinate synthase (Dehalococcoides mccartyi (strain ATCC BAA-2100 / JCM 16839 / KCTC 5957 / BAV1)).